The following is a 937-amino-acid chain: MKVVSNFIFTILLTLNLSAALEVVTSRIDRGGIQGFHGDVKVHSGATWAILGTTLCSFFGGLEVEKGASLFIKSDNGPVLALNVALSTLVRPVINNGVISLNSKSSTSFSNFDIGGSSFTNNGEIYLDSSGLVKSTAYLYAREWTNNGLIVAYQNQKAAGNIAFGTAYQTITNNGQICLRHQDFVPATKIKGTGCVTADEDTWIKLGNTILSVEPTHNFYLKDSKSSLIVHAVSSNQTFTVHGFGNGNKLGLTLPLTGNRDHFRFEYYPDTGILQLRADALPQYFKIGKGYDSKLFRIVNSRGLKNAVTYDGPVPNNEIPAVCLIPCTNGPSAPESESDLNTPTTSSIETSSYSSAATESSVVSESSSAVDSLTSSSLSSKSESSDVVSSTTNIESSSTAIETTMNSESSTDAGSSSISQSESSSTAITSSSETSSSESMSASSTTASNTSIETDSGIVSQSESSSNALSSTEQSITSSPGQSTIYVNSTVTSTITSCDENKCTEDVVTIFTTVPCSTDCVPTTGDIPMSTSYTQRTVTSTITNCDEVSCSQDVVTYTTNVPHTTVDATTTTTTSTGGDNSTGGNESGSNHGPGNGSTEGSGNGSGAGSNEGSQSGPNNGSGSGSEGGSNNGSGSDSGSNNGSGSGSNNGSGSGSTEGSEGGSGSNEGSQSGSGSQPGPNEGSEGGSGSNEGSNHGSNEGSGSGSGSGSNNGSGSGSQSGSGSGSQSGSESGSNSGSNEGSNPGAGNGSNEGSGQGSGNGSEAGSGQGSGPNNGSGSGHNDGSGSGSNQGSNPGAGSGSGSESGSKAGSHSGSNEGAKTDSIEGFHTESKPGFNTGAHTDATVTGNSVANPVTTSTESDTTISVTVSITSYMTGFDGKPKPFTTVDVIPVPHSMPSNTTDSSSSVPTIDTNENGSSIVTGGKSILFGLIVSMVVLFM.

An N-terminal signal peptide occupies residues 1 to 20 (MKVVSNFIFTILLTLNLSAA). N-linked (GlcNAc...) asparagine glycosylation occurs at Asn-16. Residues 42-62 (VHSGATWAILGTTLCSFFGGL) traverse the membrane as a helical segment. The N-linked (GlcNAc...) asparagine glycan is linked to Asn-236. The segment at 332-483 (SAPESESDLN…QSITSSPGQS (152 aa)) is disordered. Over residues 344 to 392 (TTSSIETSSYSSAATESSVVSESSSAVDSLTSSSLSSKSESSDVVSSTT) the composition is skewed to low complexity. A compositionally biased stretch (polar residues) spans 393 to 414 (NIESSSTAIETTMNSESSTDAG). The span at 415–475 (SSSISQSESS…SNALSSTEQS (61 aa)) shows a compositional bias: low complexity. N-linked (GlcNAc...) asparagine glycans are attached at residues Asn-449, Asn-488, Asn-580, Asn-585, Asn-595, and Asn-603. Low complexity predominate over residues 567–590 (DATTTTTTSTGGDNSTGGNESGSN). A disordered region spans residues 567–857 (DATTTTTTST…VANPVTTSTE (291 aa)). Residues 591–609 (HGPGNGSTEGSGNGSGAGS) are compositionally biased toward gly residues. The stretch at 610 to 613 (NEGS) is repeat 1. Positions 610 to 753 (NEGSQSGPNN…GAGNGSNEGS (144 aa)) are 7 X 4 AA repeats of N-E-G-S. N-linked (GlcNAc...) asparagine glycans are attached at residues Asn-619, Asn-631, Asn-641, and Asn-649. 2 stretches are compositionally biased toward gly residues: residues 619-631 (NGSGSGSEGGSNN) and 641-665 (NGSGSGSNNGSGSGSTEGSEGGSGS). Tandem repeats lie at residues 666 to 669 (NEGS), 680 to 683 (NEGS), 690 to 693 (NEGS), and 698 to 701 (NEGS). The span at 666-682 (NEGSQSGSGSQPGPNEG) shows a compositional bias: low complexity. Over residues 699 to 725 (EGSGSGSGSGSNNGSGSGSQSGSGSGS) the composition is skewed to gly residues. N-linked (GlcNAc...) asparagine glycosylation occurs at Asn-711. Residues 726-742 (QSGSESGSNSGSNEGSN) are compositionally biased toward low complexity. Repeat unit 6 spans residues 738–741 (NEGS). Residues 743–801 (PGAGNGSNEGSGQGSGNGSEAGSGQGSGPNNGSGSGHNDGSGSGSNQGSNPGAGSGSGS) show a composition bias toward gly residues. An N-linked (GlcNAc...) asparagine glycan is attached at Asn-747. Copy 7 of the repeat occupies 750–753 (NEGS). N-linked (GlcNAc...) asparagine glycans are attached at residues Asn-759 and Asn-773. Positions 802–814 (ESGSKAGSHSGSN) are enriched in low complexity. Residues 817–829 (AKTDSIEGFHTES) show a composition bias toward basic and acidic residues. Over residues 841–851 (ATVTGNSVANP) the composition is skewed to polar residues. Residues Asn-897 and Asn-913 are each glycosylated (N-linked (GlcNAc...) asparagine). Asn-913 carries GPI-anchor amidated asparagine lipidation. Residues 914-937 (GSSIVTGGKSILFGLIVSMVVLFM) constitute a propeptide, removed in mature form.

The protein localises to the cell membrane. It is found in the secreted. It localises to the cell wall. Functionally, nonessential component of the hyphal cell wall. The sequence is that of Hyphally-regulated protein (HYR1) from Candida albicans (Yeast).